A 294-amino-acid polypeptide reads, in one-letter code: Eukaryotic translation initiation factor 3 subunit F (294 aa).

Residues 20–163 (VTVTAQALFQ…IDPSKNSGNC (144 aa)) enclose the MPN domain.

Belongs to the eIF-3 subunit F family. As to quaternary structure, component of the eukaryotic translation initiation factor 3 (eIF-3) complex.

The protein resides in the cytoplasm. Component of the eukaryotic translation initiation factor 3 (eIF-3) complex, which is involved in protein synthesis of a specialized repertoire of mRNAs and, together with other initiation factors, stimulates binding of mRNA and methionyl-tRNAi to the 40S ribosome. The eIF-3 complex specifically targets and initiates translation of a subset of mRNAs involved in cell proliferation. This chain is Eukaryotic translation initiation factor 3 subunit F, found in Yarrowia lipolytica (strain CLIB 122 / E 150) (Yeast).